The following is a 334-amino-acid chain: Cathepsin L2 (334 aa).

The N-terminal stretch at 1–17 is a signal peptide; it reads MNLSLVLAAFCLGIASA. A propeptide spans 18–113 (activation peptide); that stretch reads VPKFDQNLDT…KVFREPLFLD (96 aa). 2 disulfides stabilise this stretch: Cys135–Cys178 and Cys169–Cys211. Cys138 is a catalytic residue. N-linked (GlcNAc...) asparagine glycosylation is present at Asn221. Cysteines 270 and 323 form a disulfide. His277 is an active-site residue. An N-linked (GlcNAc...) asparagine glycan is attached at Asn292. The active site involves Asn301.

The protein belongs to the peptidase C1 family. Predominantly expressed in the thymus and testis. Also expressed in corneal epithelium, and to a lesser extent in conjunctival epithelium and skin.

The protein localises to the lysosome. It carries out the reaction The recombinant enzyme hydrolyzes proteins (serum albumin, collagen) and synthetic substrates (Z-Phe-Arg-NHMec &gt; Z-Leu-Arg-NHMec &gt; Z-Val-Arg-NHMec).. With respect to regulation, inhibited by CST6. Cysteine protease. May have an important role in corneal physiology. The protein is Cathepsin L2 (CTSV) of Homo sapiens (Human).